A 245-amino-acid polypeptide reads, in one-letter code: Probable transcriptional regulatory protein pc1328 (245 aa).

It belongs to the TACO1 family.

Its subcellular location is the cytoplasm. The polypeptide is Probable transcriptional regulatory protein pc1328 (Protochlamydia amoebophila (strain UWE25)).